The sequence spans 264 residues: Thymidylate synthase (264 aa).

Arginine 21 is a dUMP binding site. Residue histidine 51 participates in (6R)-5,10-methylene-5,6,7,8-tetrahydrofolate binding. 126–127 is a binding site for dUMP; that stretch reads RR. Cysteine 146 functions as the Nucleophile in the catalytic mechanism. Residues 166-169, asparagine 177, and 207-209 contribute to the dUMP site; these read RSAD and HLY. Aspartate 169 contacts (6R)-5,10-methylene-5,6,7,8-tetrahydrofolate. Alanine 263 is a binding site for (6R)-5,10-methylene-5,6,7,8-tetrahydrofolate.

Belongs to the thymidylate synthase family. Bacterial-type ThyA subfamily. In terms of assembly, homodimer.

Its subcellular location is the cytoplasm. It catalyses the reaction dUMP + (6R)-5,10-methylene-5,6,7,8-tetrahydrofolate = 7,8-dihydrofolate + dTMP. It participates in pyrimidine metabolism; dTTP biosynthesis. Catalyzes the reductive methylation of 2'-deoxyuridine-5'-monophosphate (dUMP) to 2'-deoxythymidine-5'-monophosphate (dTMP) while utilizing 5,10-methylenetetrahydrofolate (mTHF) as the methyl donor and reductant in the reaction, yielding dihydrofolate (DHF) as a by-product. This enzymatic reaction provides an intracellular de novo source of dTMP, an essential precursor for DNA biosynthesis. This Cytophaga hutchinsonii (strain ATCC 33406 / DSM 1761 / CIP 103989 / NBRC 15051 / NCIMB 9469 / D465) protein is Thymidylate synthase.